An 81-amino-acid polypeptide reads, in one-letter code: Photosystem I iron-sulfur center (81 aa).

4Fe-4S ferredoxin-type domains lie at 2–31 (SHSV…MIPW) and 39–68 (IASA…VRVY). [4Fe-4S] cluster is bound by residues Cys-11, Cys-14, Cys-17, Cys-21, Cys-48, Cys-51, Cys-54, and Cys-58.

As to quaternary structure, the eukaryotic PSI reaction center is composed of at least 11 subunits. [4Fe-4S] cluster serves as cofactor.

The protein localises to the plastid. The protein resides in the chloroplast thylakoid membrane. It catalyses the reaction reduced [plastocyanin] + hnu + oxidized [2Fe-2S]-[ferredoxin] = oxidized [plastocyanin] + reduced [2Fe-2S]-[ferredoxin]. In terms of biological role, apoprotein for the two 4Fe-4S centers FA and FB of photosystem I (PSI); essential for photochemical activity. FB is the terminal electron acceptor of PSI, donating electrons to ferredoxin. The C-terminus interacts with PsaA/B/D and helps assemble the protein into the PSI complex. Required for binding of PsaD and PsaE to PSI. PSI is a plastocyanin-ferredoxin oxidoreductase, converting photonic excitation into a charge separation, which transfers an electron from the donor P700 chlorophyll pair to the spectroscopically characterized acceptors A0, A1, FX, FA and FB in turn. The sequence is that of Photosystem I iron-sulfur center from Sorghum bicolor (Sorghum).